The sequence spans 452 residues: Glutamyl-tRNA(Gln) amidotransferase subunit A (452 aa).

Residues K56 and S131 each act as charge relay system in the active site. S155 (acyl-ester intermediate) is an active-site residue.

Belongs to the amidase family. GatA subfamily. As to quaternary structure, heterotrimer of A, B and C subunits.

The enzyme catalyses L-glutamyl-tRNA(Gln) + L-glutamine + ATP + H2O = L-glutaminyl-tRNA(Gln) + L-glutamate + ADP + phosphate + H(+). Allows the formation of correctly charged Gln-tRNA(Gln) through the transamidation of misacylated Glu-tRNA(Gln) in organisms which lack glutaminyl-tRNA synthetase. The reaction takes place in the presence of glutamine and ATP through an activated gamma-phospho-Glu-tRNA(Gln). The sequence is that of Glutamyl-tRNA(Gln) amidotransferase subunit A from Campylobacter hominis (strain ATCC BAA-381 / DSM 21671 / CCUG 45161 / LMG 19568 / NCTC 13146 / CH001A).